A 251-amino-acid chain; its full sequence is Malonyl-[acyl-carrier protein] O-methyltransferase (251 aa).

This sequence belongs to the methyltransferase superfamily.

It catalyses the reaction malonyl-[ACP] + S-adenosyl-L-methionine = malonyl-[ACP] methyl ester + S-adenosyl-L-homocysteine. Its pathway is cofactor biosynthesis; biotin biosynthesis. Its function is as follows. Converts the free carboxyl group of a malonyl-thioester to its methyl ester by transfer of a methyl group from S-adenosyl-L-methionine (SAM). It allows to synthesize pimeloyl-ACP via the fatty acid synthetic pathway. This Enterobacter lignolyticus (strain SCF1) protein is Malonyl-[acyl-carrier protein] O-methyltransferase.